The chain runs to 69 residues: Mu-conotoxin-like Am3.3 (69 aa).

The signal sequence occupies residues 1 to 20 (MMSKLGVLLTICLLLFPLTA). Residues 21–52 (VPLDGDQPADRPAERMQDDISSENHPMFDAIR) constitute a propeptide that is removed on maturation. The residue at position 68 (C68) is a Cysteine amide.

Belongs to the conotoxin M family. Is not hydroxylated. In terms of processing, contains 3 disulfide bonds. In terms of tissue distribution, expressed by the venom duct.

Its subcellular location is the secreted. Its function is as follows. Mu-conotoxins block voltage-gated sodium channels (Nav). The polypeptide is Mu-conotoxin-like Am3.3 (Conus amadis (Amadis cone)).